A 435-amino-acid polypeptide reads, in one-letter code: MYKSITTLLKQQPQSILRNYSTDKFPRGFKTGTAACGLKKTGNKDICIIHSSAPCNVAAVFTENKVKAAPVLLSKQLLETNNYKGFNSLVINSGGANACTGEQGLKNAKTMSNLTSSLLKAPQASLVMSTGIIGQQLDMSKVEKGIADAVTTLNESDWISAARAIMTTDKVPKLAQKSVSLNGGEVHIVGICKGAGMIHPNMATMLCTVCTDASISEDCLRALLKHSVHYSFNSINVDGDMSTNDTVAIFANGSAGNKHITDTTSSDFLQLQEAVREVTTRLAQMIVRDAEGASKFVTIKIHGADTEQNGHIVANSISTSSLVKSALYGEDANWGRVLAAVGYSGVDIDPLKVCMWFAKGDGKDVGLGKKNDPETSMQFLEKGTPLAKDENKAAQLLSNNDVAIVVELGMGKASSTMWTCDLTEEYVRANSHYRT.

Substrate-binding residues include Thr-167, Lys-193, Thr-204, Glu-291, Asn-430, and Thr-435. Catalysis depends on Thr-204, which acts as the Nucleophile.

This sequence belongs to the ArgJ family. In terms of assembly, heterodimer of an alpha and a beta chain. The alpha and beta chains are autoproteolytically processed from a single precursor protein within the mitochondrion.

The protein localises to the mitochondrion matrix. The enzyme catalyses N(2)-acetyl-L-ornithine + L-glutamate = N-acetyl-L-glutamate + L-ornithine. The catalysed reaction is L-glutamate + acetyl-CoA = N-acetyl-L-glutamate + CoA + H(+). It functions in the pathway amino-acid biosynthesis; L-arginine biosynthesis; L-ornithine and N-acetyl-L-glutamate from L-glutamate and N(2)-acetyl-L-ornithine (cyclic): step 1/1. The protein operates within amino-acid biosynthesis; L-arginine biosynthesis; N(2)-acetyl-L-ornithine from L-glutamate: step 1/4. Its function is as follows. Catalyzes two activities which are involved in the cyclic version of arginine biosynthesis: the synthesis of acetylglutamate from glutamate and acetyl-CoA, and of ornithine by transacetylation between acetylornithine and glutamate. This chain is Arginine biosynthesis bifunctional protein ArgJ, mitochondrial, found in Heterostelium pallidum (strain ATCC 26659 / Pp 5 / PN500) (Cellular slime mold).